A 643-amino-acid chain; its full sequence is Threonine--tRNA ligase (643 aa).

Residues 1–61 form the TGS domain; sequence MIKITLKDGS…NEDSSLEICT (61 aa). Residues 240 to 540 form a catalytic region; that stretch reads DHNKLGRELG…LIEKYAGALP (301 aa). 3 residues coordinate Zn(2+): Cys335, His386, and His517.

It belongs to the class-II aminoacyl-tRNA synthetase family. In terms of assembly, homodimer. It depends on Zn(2+) as a cofactor.

The protein localises to the cytoplasm. The catalysed reaction is tRNA(Thr) + L-threonine + ATP = L-threonyl-tRNA(Thr) + AMP + diphosphate + H(+). Functionally, catalyzes the attachment of threonine to tRNA(Thr) in a two-step reaction: L-threonine is first activated by ATP to form Thr-AMP and then transferred to the acceptor end of tRNA(Thr). Also edits incorrectly charged L-seryl-tRNA(Thr). The protein is Threonine--tRNA ligase of Clostridium perfringens (strain ATCC 13124 / DSM 756 / JCM 1290 / NCIMB 6125 / NCTC 8237 / Type A).